Consider the following 533-residue polypeptide: MATEHVNGNGTEEPMDTTSAVIHSENFQTLLDAGLPQKVAEKLDEIYVAGQRKYGGPPPDSVYSGQQPSVGTEIFVGKIPRDLFEDELVPLFEKAGPIWDLRLMMDPLTGLNRGYAFVTFCTKEAAQEAVKLYNNHEIRSGKHIGVCISVANNRLFVGSIPKSKTKEQILEEFSKVTEGLTDVILYHQPDDKKKNRGFCFLEYEDHKTAAQARRRLMSGKVKVWGNVGTVEWADPIEDPDPEVMAKVKVLFVRNLANTVTEEILEKSFSQFGKLERVKKLKDYAFIHFDERDGAVKAMEEMNGKDLEGENIEIVFAKPPDQKRKERKAQRQAAKNQMYDDYYYYGPPHMPPPTRGRGRGGRGGYGYPPDYYGYEDYYDYYGYDYHNYRGGYEDPYYGYEDFQVGARGRGGRGARGAAPSRGRGAAPPRGRAGYSQRGGPGSARGVRGARGGAQQQRGRGVRGARGGRGGNVGGKRKADGYNQPDSKRRQTNNQNWGSQPIAQQPLQGGDHSGNYGYKSENEEFYQDTFGQQWK.

Alanine 2 bears the N-acetylalanine mark. Serine 69 is subject to Phosphoserine. 3 consecutive RRM domains span residues 72–151 (TEIF…ISVA), 153–235 (NRLF…WADP), and 248–318 (KVLF…FAKP). A Glycyl lysine isopeptide (Lys-Gly) (interchain with G-Cter in SUMO2) cross-link involves residue lysine 78. Lysine 131 is modified (N6-acetyllysine). Lysine 273 carries the N6-acetyllysine modification. Tyrosine 283 is modified (phosphotyrosine). Residues 310–471 (NIEIVFAKPP…GARGGRGGNV (162 aa)) form an interaction with APOBEC1 region. Arginine 354 bears the Asymmetric dimethylarginine; by PRMT1; alternate mark. Arginine 354 is subject to Omega-N-methylarginine; by PRMT1; alternate. 6 tandem repeats follow at residues 358–360 (RGG), 361–363 (RGG), 370–374 (YYGYE), 379–382 (YYGY), 388–390 (RGG), and 395–398 (YYGY). Residues 358-469 (RGGRGGYGYP…VRGARGGRGG (112 aa)) are 8 X 3 AA repeats of R-G-G. The segment at 370 to 398 (YYGYEDYYDYYGYDYHNYRGGYEDPYYGY) is 3 X 4 AA repeats of Y-Y-G-Y. Arginine 406 is modified (omega-N-methylarginine; by PRMT1). The tract at residues 407 to 533 (GRGGRGARGA…YQDTFGQQWK (127 aa)) is disordered. Residues 408–410 (RGG) form a 1-4 repeat. Over residues 414–432 (RGAAPSRGRGAAPPRGRAG) the composition is skewed to low complexity. Arginine 420 is subject to Asymmetric dimethylarginine; by PRMT1. Arginine 428 is modified (asymmetric dimethylarginine; by PRMT1; alternate). Arginine 428 bears the Omega-N-methylarginine; by PRMT1; alternate mark. The tract at residues 428–459 (RGRAGYSQRGGPGSARGVRGARGGAQQQRGRG) is interaction with SMN. Arginine 436 is modified (asymmetric dimethylarginine; alternate). The residue at position 436 (arginine 436) is an Omega-N-methylarginine; alternate. Residues 436 to 438 (RGG) form a 1-5 repeat. Arginine 446 and arginine 449 each carry asymmetric dimethylarginine; by PRMT1; alternate. Omega-N-methylarginine; by PRMT1; alternate occurs at positions 446 and 449. Repeat copies occupy residues 449 to 451 (RGG), 464 to 466 (RGG), and 467 to 469 (RGG). Over residues 460–472 (VRGARGGRGGNVG) the composition is skewed to gly residues. The Bipartite nuclear localization signal signature appears at 474–488 (KRKADGYNQPDSKRR). The span at 490–505 (TNNQNWGSQPIAQQPL) shows a compositional bias: polar residues. At serine 497 the chain carries Phosphoserine. A Glycyl lysine isopeptide (Lys-Gly) (interchain with G-Cter in SUMO2) cross-link involves residue lysine 517.

Identified in a histone pre-mRNA complex, at least composed of ERI1, LSM11, SLBP, SNRPB, SYNCRIP and YBX1. Identified in the spliceosome C complex. Component of the coding region determinant (CRD)-mediated complex, composed of DHX9, HNRNPU, IGF2BP1, SYNCRIP and YBX1. Identified in a mRNP complex, at least composed of DHX9, DDX3X, ELAVL1, HNRNPU, IGF2BP1, ILF3, PABPC1, PCBP2, PTBP2, STAU1, STAU2, SYNCRIP and YBX1. Identified in a mRNP granule complex, at least composed of ACTB, ACTN4, DHX9, ERG, HNRNPA1, HNRNPA2B1, HNRNPAB, HNRNPD, HNRNPL, HNRNPR, HNRNPU, HSPA1, HSPA8, IGF2BP1, ILF2, ILF3, NCBP1, NCL, PABPC1, PABPC4, PABPN1, RPLP0, RPS3, RPS3A, RPS4X, RPS8, RPS9, SYNCRIP, YBX1 and untranslated mRNAs. Component of the APOB mRNA editosome. Interacts with APOBEC1 and A1CF. Part of a complex associated with the FOS mCRD domain and consisting of PABPC1, PAIP1, CSDE1/UNR, HNRPD and SYNCRIP. Interacts with HNRPR, SMN, POLR2A hyperphosphorylated C-terminal domain, minute virus of mice (MVM) NS1 protein and through its C-terminal domain with SYT7, SYT8 and SYT9. The non-phosphorylated and phosphorylated forms are colocalized with PAIP1 in polysomes. Interacts with GTPBP1. Interacts with HABP4. Post-translationally, phosphorylated on tyrosine. The membrane-bound form found in microsomes is phosphorylated in vitro by insulin receptor tyrosine kinase (INSR). Phosphorylation is inhibited upon binding to RNA, whereas the cytoplasmic form is poorly phosphorylated.

The protein resides in the nucleus. It localises to the nucleoplasm. It is found in the cytoplasm. The protein localises to the microsome. Functionally, heterogenous nuclear ribonucleoprotein (hnRNP) implicated in mRNA processing mechanisms. Component of the CRD-mediated complex that promotes MYC mRNA stability. Is associated in vitro with pre-mRNA, splicing intermediates and mature mRNA protein complexes. Binds to apoB mRNA AU-rich sequences. Part of the APOB mRNA editosome complex and may modulate the postranscriptional C to U RNA-editing of the APOB mRNA through either by binding to A1CF (APOBEC1 complementation factor), to APOBEC1 or to RNA itself. May be involved in translationally coupled mRNA turnover. Implicated with other RNA-binding proteins in the cytoplasmic deadenylation/translational and decay interplay of the FOS mRNA mediated by the major coding-region determinant of instability (mCRD) domain. Interacts in vitro preferentially with poly(A) and poly(U) RNA sequences. May be involved in cytoplasmic vesicle-based mRNA transport through interaction with synaptotagmins. This chain is Heterogeneous nuclear ribonucleoprotein Q (Syncrip), found in Rattus norvegicus (Rat).